Reading from the N-terminus, the 337-residue chain is Mannitol dehydrogenase (337 aa).

Zn(2+) contacts are provided by C27, H49, C80, C83, C86, C94, and C143.

This sequence belongs to the zinc-containing alcohol dehydrogenase family. Requires Zn(2+) as cofactor.

The enzyme catalyses D-mannitol + NAD(+) = D-mannose + NADH + H(+). Its function is as follows. Oxidizes mannitol to mannose. Provides the initial step by which translocated mannitol is committed to central metabolism and, by regulating mannitol pool size, is important in regulating salt tolerance at the cellular level. This chain is Mannitol dehydrogenase (ELI3), found in Petroselinum crispum (Parsley).